Reading from the N-terminus, the 399-residue chain is Centrosomal protein 43 (399 aa).

The region spanning 70–102 is the LisH domain; that stretch reads DGRLVASLVAEFLQFFNLDFTLAVFQPETSTLQ. Disordered stretches follow at residues 139–218 and 232–308; these read EKGP…SSLH and NRTL…SESK. Residue threonine 143 is modified to Phosphothreonine. A phosphoserine mark is found at serine 152, serine 156, and serine 160. Residues 163 to 172 show a composition bias toward polar residues; sequence GKTSAQTTPS. Residue threonine 170 is modified to Phosphothreonine. Positions 175–186 are enriched in basic residues; sequence PRYKGQGKKKTS. Serine 202 is subject to Phosphoserine. A compositionally biased stretch (low complexity) spans 205–218; it reads SVSLSEPKSKSSLH. Threonine 234 is modified (phosphothreonine). Residues 245 to 256 show a composition bias toward acidic residues; that stretch reads PDEDDMEGDSFF. Residues 259–275 are compositionally biased toward basic and acidic residues; the sequence is PIPKPEKTYGLRKEPRK. Over residues 286 to 302 the composition is skewed to low complexity; the sequence is APPLKSGLSSLAGAPSL. 2 positions are modified to phosphoserine: serine 301 and serine 326. The interval 331–353 is disordered; sequence TGEDDDYVDDFNSTSHRSEKSEI. Tyrosine 337 is subject to Phosphotyrosine.

Belongs to the CEP43 family. As to quaternary structure, homodimer. Part of a ternary complex that contains CEP350, CEP43 and MAPRE1. Interacts directly with CEP350 and MAPRE1. Interacts with CEP19. Interacts (via N-terminus) with CEP350 (via C-terminus). As to expression, ubiquitous. Highly expressed in heart, liver, muscle, kidney, intestine, colon, adrenal gland, prostate, testis, and pancreas.

The protein localises to the cytoplasm. It is found in the cytoskeleton. It localises to the microtubule organizing center. The protein resides in the centrosome. Its subcellular location is the centriole. The protein localises to the cilium basal body. Its function is as follows. Required for anchoring microtubules to the centrosomes. Required for ciliation. The sequence is that of Centrosomal protein 43 from Homo sapiens (Human).